The following is a 130-amino-acid chain: Ribosome-binding factor A (130 aa).

It belongs to the RbfA family. As to quaternary structure, monomer. Binds 30S ribosomal subunits, but not 50S ribosomal subunits or 70S ribosomes.

The protein localises to the cytoplasm. Its function is as follows. One of several proteins that assist in the late maturation steps of the functional core of the 30S ribosomal subunit. Associates with free 30S ribosomal subunits (but not with 30S subunits that are part of 70S ribosomes or polysomes). Required for efficient processing of 16S rRNA. May interact with the 5'-terminal helix region of 16S rRNA. The protein is Ribosome-binding factor A of Prochlorococcus marinus (strain MIT 9301).